The primary structure comprises 178 residues: Large ribosomal subunit protein uL5 (178 aa).

This sequence belongs to the universal ribosomal protein uL5 family. As to quaternary structure, part of the 50S ribosomal subunit; part of the 5S rRNA/L5/L18/L25 subcomplex. Contacts the 5S rRNA and the P site tRNA. Forms a bridge to the 30S subunit in the 70S ribosome.

In terms of biological role, this is one of the proteins that bind and probably mediate the attachment of the 5S RNA into the large ribosomal subunit, where it forms part of the central protuberance. In the 70S ribosome it contacts protein S13 of the 30S subunit (bridge B1b), connecting the 2 subunits; this bridge is implicated in subunit movement. Contacts the P site tRNA; the 5S rRNA and some of its associated proteins might help stabilize positioning of ribosome-bound tRNAs. The chain is Large ribosomal subunit protein uL5 from Aliivibrio fischeri (strain ATCC 700601 / ES114) (Vibrio fischeri).